Consider the following 265-residue polypeptide: Serine protease ami (265 aa).

Residues 1 to 21 (MNVSWALLAVVLVLTVATYEC) form the signal peptide. The N-linked (GlcNAc...) asparagine glycan is linked to Asn2. A propeptide spans 22 to 26 (RPRGR) (activation peptide). The Peptidase S1 domain occupies 27–254 (ILGGQDSKAE…YKSWIMESMY (228 aa)). Cys52 and Cys68 form a disulfide bridge. The Charge relay system role is filled by His67. Residues Asn71, Asn74, and Asn108 are each glycosylated (N-linked (GlcNAc...) asparagine). Catalysis depends on Asp115, which acts as the Charge relay system. Intrachain disulfides connect Cys149/Cys215, Cys180/Cys196, and Cys205/Cys230. Ser209 serves as the catalytic Charge relay system. N-linked (GlcNAc...) asparagine glycosylation occurs at Asn255.

This sequence belongs to the peptidase S1 family.

It localises to the secreted. Probable serine protease. The sequence is that of Serine protease ami from Xenopus tropicalis (Western clawed frog).